Here is a 216-residue protein sequence, read N- to C-terminus: 3-isopropylmalate dehydratase small subunit (216 aa).

The protein belongs to the LeuD family. LeuD type 1 subfamily. Heterodimer of LeuC and LeuD.

The catalysed reaction is (2R,3S)-3-isopropylmalate = (2S)-2-isopropylmalate. Its pathway is amino-acid biosynthesis; L-leucine biosynthesis; L-leucine from 3-methyl-2-oxobutanoate: step 2/4. In terms of biological role, catalyzes the isomerization between 2-isopropylmalate and 3-isopropylmalate, via the formation of 2-isopropylmaleate. The polypeptide is 3-isopropylmalate dehydratase small subunit (Burkholderia thailandensis (strain ATCC 700388 / DSM 13276 / CCUG 48851 / CIP 106301 / E264)).